A 288-amino-acid polypeptide reads, in one-letter code: Ribosomal RNA small subunit methyltransferase A (288 aa).

Asn-37, Leu-39, Gly-64, Glu-86, Asp-112, and Asn-131 together coordinate S-adenosyl-L-methionine.

The protein belongs to the class I-like SAM-binding methyltransferase superfamily. rRNA adenine N(6)-methyltransferase family. RsmA subfamily.

The protein resides in the cytoplasm. It carries out the reaction adenosine(1518)/adenosine(1519) in 16S rRNA + 4 S-adenosyl-L-methionine = N(6)-dimethyladenosine(1518)/N(6)-dimethyladenosine(1519) in 16S rRNA + 4 S-adenosyl-L-homocysteine + 4 H(+). Specifically dimethylates two adjacent adenosines (A1518 and A1519) in the loop of a conserved hairpin near the 3'-end of 16S rRNA in the 30S particle. May play a critical role in biogenesis of 30S subunits. This Rhodospirillum rubrum (strain ATCC 11170 / ATH 1.1.1 / DSM 467 / LMG 4362 / NCIMB 8255 / S1) protein is Ribosomal RNA small subunit methyltransferase A.